The chain runs to 388 residues: Purple acid phosphatase 19 (388 aa).

The N-terminal stretch at Met1–Ala24 is a signal peptide. Residues Asn97 and Asn111 are each glycosylated (N-linked (GlcNAc...) asparagine). Asp145 and Tyr148 together coordinate Fe cation. Asp145 contacts Zn(2+). Asn182 serves as a coordination point for Zn(2+). Asn182 is a substrate binding site. A glycan (N-linked (GlcNAc...) asparagine) is linked at Asn226. His238 lines the Zn(2+) pocket. His248 acts as the Proton donor in catalysis. Zn(2+) is bound at residue His275. Position 275–277 (His275–His277) interacts with substrate. A Fe cation-binding site is contributed by His277. N-linked (GlcNAc...) asparagine glycans are attached at residues Asn291 and Asn348.

It belongs to the metallophosphoesterase superfamily. Purple acid phosphatase family. As to quaternary structure, homodimer. Requires Fe cation as cofactor. Zn(2+) is required as a cofactor. In terms of tissue distribution, specifically expressed in flowers.

The protein localises to the secreted. It carries out the reaction a phosphate monoester + H2O = an alcohol + phosphate. In Arabidopsis thaliana (Mouse-ear cress), this protein is Purple acid phosphatase 19 (PAP19).